Here is a 158-residue protein sequence, read N- to C-terminus: MSSSSSIKLQPWNDFIEWGRYSIPGSQNAITRMEDNLNFYSGNYIAIVAVVLLITLFTNMNLLVAILLLGAIGYYLFFVQKGDKNIGFAVLTPMIQMVILGVVSVIVIYKLSGLTLFYTTLVSLLFVLAHSALKMRNLKNKASNFVSGIKNDLKNELK.

The next 4 helical transmembrane spans lie at 36–58 (NLNF…TLFT), 62–79 (LLVA…LFFV), 88–108 (FAVL…VIVI), and 113–133 (GLTL…HSAL).

It belongs to the PRA1 family.

The protein localises to the membrane. Its function is as follows. May act as a general Rab protein regulator. This Dictyostelium discoideum (Social amoeba) protein is PRA1 family protein 2 (prafB).